The chain runs to 746 residues: Catalase-peroxidase (746 aa).

The span at 1–20 shows a compositional bias: polar residues; the sequence is MSSDTSSSRPPQPDSGTASK. A disordered region spans residues 1-42; it reads MSSDTSSSRPPQPDSGTASKSESENPAIPSPKPKAHAPLTNR. The tryptophyl-tyrosyl-methioninium (Trp-Tyr) (with M-262) cross-link spans 113–236; the sequence is WHAAGTYRIH…YGATTMGLIY (124 aa). His-114 serves as the catalytic Proton acceptor. The tryptophyl-tyrosyl-methioninium (Tyr-Met) (with W-113) cross-link spans 236–262; it reads YVNPEGPEGKPDPIAAAIDIRETFGRM. A heme b-binding site is contributed by His-277.

This sequence belongs to the peroxidase family. Peroxidase/catalase subfamily. As to quaternary structure, homodimer or homotetramer. Heme b serves as cofactor. Formation of the three residue Trp-Tyr-Met cross-link is important for the catalase, but not the peroxidase activity of the enzyme.

The catalysed reaction is H2O2 + AH2 = A + 2 H2O. The enzyme catalyses 2 H2O2 = O2 + 2 H2O. In terms of biological role, bifunctional enzyme with both catalase and broad-spectrum peroxidase activity. May play a role in the intracellular survival of mycobacteria. The protein is Catalase-peroxidase of Mycobacterium intracellulare.